A 110-amino-acid chain; its full sequence is Small ribosomal subunit protein bS16 (110 aa).

Positions 81–104 (VRPAEVLGKQKQEKERSAKKKDAT) are enriched in basic and acidic residues. The segment at 81-110 (VRPAEVLGKQKQEKERSAKKKDATASETSE) is disordered.

This sequence belongs to the bacterial ribosomal protein bS16 family.

The polypeptide is Small ribosomal subunit protein bS16 (Prochlorococcus marinus (strain NATL1A)).